The chain runs to 671 residues: DNA ligase (671 aa).

Residues 32–36, 81–82, and glutamate 113 each bind NAD(+); these read DAEYD and SL. The active-site N6-AMP-lysine intermediate is lysine 115. NAD(+)-binding residues include arginine 136, glutamate 173, lysine 290, and lysine 314. Zn(2+) contacts are provided by cysteine 408, cysteine 411, cysteine 426, and cysteine 432. The BRCT domain occupies 593–671; the sequence is EIDSPFAGKT…EAEMLRLLGS (79 aa).

It belongs to the NAD-dependent DNA ligase family. LigA subfamily. Mg(2+) serves as cofactor. It depends on Mn(2+) as a cofactor.

It carries out the reaction NAD(+) + (deoxyribonucleotide)n-3'-hydroxyl + 5'-phospho-(deoxyribonucleotide)m = (deoxyribonucleotide)n+m + AMP + beta-nicotinamide D-nucleotide.. Functionally, DNA ligase that catalyzes the formation of phosphodiester linkages between 5'-phosphoryl and 3'-hydroxyl groups in double-stranded DNA using NAD as a coenzyme and as the energy source for the reaction. It is essential for DNA replication and repair of damaged DNA. The sequence is that of DNA ligase from Escherichia coli O9:H4 (strain HS).